Here is a 734-residue protein sequence, read N- to C-terminus: MSLKNGEQNDLSPKDSVKGNDQYRSPSGIHVEHEEESRNDFWQFESSNLFRHPRIHLEPQEKSDNNLKKFVIKKLEKSCQCSSTKAKNTIFGFLPVLQWLPKYDLKKNILGDMMSGLIVGILLVPQSIAYSLLAGQEPIYGLYTSFFASLIYFILGTSRHISVGIFGILCLMIGEVVDRELYIAGYDTVHAASNESSLVNQMSNQTCDRSCYAITVGSTVTFVAGVYQVAMGFFQVGFVSVYLSDALLGGFVTGASFTILTSQVKYLLGLSLPRSGGVGSLITTWIHIFRNIHKTNICDLITSLLCLLVLLPTKELNERFKSKLKAPIPVELFVVVAATLASHFGKLSEKYGTSIAGHIPTGFMPPKAPDWNLIPRVAVDAIAIAIIGFAITVSLSEMFAKKHGYTVKANQEMYAIGFCNIIPSFFHSFTTSAALAKTLVKESTGCQTQVSGVMTALVLLLVLLVIAPLFFSLQKSVLGVITIVNLRGALCKFKDLPQMWRISRMDTVIWFVTMLSSALISTEIGLLTGVCFSMFCVILRTQKPKASLLGLVEDSEVFESMSAYKNLQAKSGIKIFRFVAPLYYVNKEYFKSVLYKKTLNPVLVKAAQRKAAKKKIKRETVTLSGIQDEVSVQLSYDPLEFHTIVIDCSAIQFLDTAGIHTLKEVRRDYEAIGIQVLLAQCNPSVRDSLARGEYCKKDEENLLFYSVYEAMTFAEDSQNQKERYVPNGPSFSSD.

The segment covering 1–11 has biased composition (polar residues); it reads MSLKNGEQNDL. A disordered region spans residues 1–38; sequence MSLKNGEQNDLSPKDSVKGNDQYRSPSGIHVEHEEESR. Phosphoserine occurs at positions 12 and 16. A run of 2 helical transmembrane segments spans residues 113-133 and 138-158; these read MMSGLIVGILLVPQSIAYSLL and PIYGLYTSFFASLIYFILGTS. N-linked (GlcNAc...) asparagine glycosylation is found at N194 and N204. 8 helical membrane-spanning segments follow: residues 222-242, 247-267, 269-289, 292-312, 379-399, 415-435, 453-473, and 519-539; these read FVAGVYQVAMGFFQVGFVSVY, LLGGFVTGASFTILTSQVKYL, GLSLPRSGGVGSLITTWIHIF, IHKTNICDLITSLLCLLVLLP, VDAIAIAIIGFAITVSLSEMF, AIGFCNIIPSFFHSFTTSAAL, VMTALVLLLVLLVIAPLFFSL, and LISTEIGLLTGVCFSMFCVIL. In terms of domain architecture, STAS spans 563–714; that stretch reads AYKNLQAKSG…YSVYEAMTFA (152 aa).

Belongs to the SLC26A/SulP transporter (TC 2.A.53) family. Post-translationally, N-glycosylated.

It is found in the cell membrane. It localises to the apical cell membrane. The enzyme catalyses oxalate(in) + sulfate(out) = oxalate(out) + sulfate(in). The catalysed reaction is sulfate(out) + 2 chloride(in) = sulfate(in) + 2 chloride(out). It catalyses the reaction oxalate(out) + 2 chloride(in) = oxalate(in) + 2 chloride(out). It carries out the reaction bromide(in) + chloride(out) = bromide(out) + chloride(in). The enzyme catalyses nitrate(in) + chloride(out) = nitrate(out) + chloride(in). The catalysed reaction is iodide(in) + chloride(out) = iodide(out) + chloride(in). Sulfate transporter which mediates sulfate uptake into chondrocytes in order to maintain adequate sulfation of proteoglycans which is needed for cartilage development. Mediates electroneutral anion exchange of sulfate ions for oxalate ions, sulfate and oxalate ions for chloride and/or hydroxyl ions and chloride ions for bromide, iodide and nitrate ions. The coupling of sulfate transport to both hydroxyl and chloride ions likely serves to ensure transport at both acidic pH when most sulfate uptake is mediated by sulfate-hydroxide exchange and alkaline pH when most sulfate uptake is mediated by sulfate-chloride exchange. Essential for chondrocyte proliferation, differentiation and cell size expansion. This Ovis aries (Sheep) protein is Sulfate transporter (SLC26A2).